The chain runs to 412 residues: MKIYLVGGAVRDALLGLPVKDRDWVVVGSTPQEMLDAGYQQIGRDFPVFLHPQTHEEYALARTERKSGSGYTGFTCYAAPDVTLEDDLKRRDLTINALAQDDNGEIIDPYNGLGDLQNRLLRHVSPAFGEDPLRVLRVARFAARYAHLGFRIADETLALMREMTHAGELEHLTPERVWKETESALTTRNPQVFFQVLRDCGALRVLFPEIDALFGVPAPAKWHPEIDTGIHTLMTLSMAAMLSPQVDVRFATLCHDLGKGLTPPELWPRHHGHGPAGVKLVEQLCQRLRVPNEIRDLARLVAEFHDLIHTFPMLNPKTIVKLFDSIDAWRKPQRVEQLALTSEADVRGRTGFESADYPQGRWLREAWEVAQSVPTKAVVEAGFKGVEIREELTRRRIAAVASWKEQRCPKPE.

Residues Gly8 and Arg11 each contribute to the ATP site. CTP contacts are provided by Gly8 and Arg11. Mg(2+) is bound by residues Asp21 and Asp23. The ATP site is built by Arg91, Arg137, and Arg140. 3 residues coordinate CTP: Arg91, Arg137, and Arg140. The region spanning 228 to 329 (TGIHTLMTLS…VKLFDSIDAW (102 aa)) is the HD domain.

It belongs to the tRNA nucleotidyltransferase/poly(A) polymerase family. Bacterial CCA-adding enzyme type 1 subfamily. As to quaternary structure, monomer. Can also form homodimers and oligomers. Requires Mg(2+) as cofactor. Ni(2+) serves as cofactor.

It catalyses the reaction a tRNA precursor + 2 CTP + ATP = a tRNA with a 3' CCA end + 3 diphosphate. The enzyme catalyses a tRNA with a 3' CCA end + 2 CTP + ATP = a tRNA with a 3' CCACCA end + 3 diphosphate. In terms of biological role, catalyzes the addition and repair of the essential 3'-terminal CCA sequence in tRNAs without using a nucleic acid template. Adds these three nucleotides in the order of C, C, and A to the tRNA nucleotide-73, using CTP and ATP as substrates and producing inorganic pyrophosphate. tRNA 3'-terminal CCA addition is required both for tRNA processing and repair. Also involved in tRNA surveillance by mediating tandem CCA addition to generate a CCACCA at the 3' terminus of unstable tRNAs. While stable tRNAs receive only 3'-terminal CCA, unstable tRNAs are marked with CCACCA and rapidly degraded. The sequence is that of Multifunctional CCA protein from Escherichia coli O7:K1 (strain IAI39 / ExPEC).